The primary structure comprises 982 residues: E3 ubiquitin-protein ligase CBL-B (982 aa).

The tract at residues 35–167 (PPKQAAADRR…KAIFPNGQFQ (133 aa)) is 4H. Positions 35–343 (PPKQAAADRR…GRSYNPDLTG (309 aa)) constitute a Cbl-PTB domain. The EF-hand-like stretch occupies residues 168-240 (GDNFRITKAD…FEFDIFTRLF (73 aa)). Positions 221, 223, 225, 227, and 232 each coordinate Ca(2+). The tract at residues 241-343 (QPWGSILRNW…GRSYNPDLTG (103 aa)) is SH2-like. Ser-282 is subject to Phosphoserine; by PKC/PRKCQ. Arg-286 is a 4-O-phospho-L-tyrosine binding site. A linker region spans residues 344-372 (LCEPTPHDHIKVTQEQYELYCEMGSTFQL). Position 363 is a phosphotyrosine (Tyr-363). The RING-type zinc-finger motif lies at 373 to 412 (CKICAENDKDVKIEPCGHLMCTSCLTAWQESDGQGCPFCR). Positions 466–571 (NVRKCTDRQN…PPPIPPDNRL (106 aa)) are disordered. Residues 473-486 (RQNSPVTSPGSSPL) are compositionally biased toward polar residues. Phosphoserine occurs at positions 476, 480, 484, 521, 525, and 529. The tract at residues 543–568 (PLPAPPPPLRDPPPPPPERPPPIPPD) is interaction with VAV1. Pro residues predominate over residues 544–567 (LPAPPPPLRDPPPPPPERPPPIPP). Position 634 is a phosphoserine (Ser-634). Tyr-665 and Tyr-709 each carry phosphotyrosine. Disordered regions lie at residues 688–731 (GPLA…NVKP) and 769–929 (FDSA…EAAL). The span at 715–725 (HPVSLNSQPSH) shows a compositional bias: polar residues. The span at 819 to 828 (PSLPPPPPPA) shows a compositional bias: pro residues. A compositionally biased stretch (low complexity) spans 838-848 (PPGSSSRPSSG). Over residues 880-899 (VKTNRTSQDYDQLPSCSDGS) the composition is skewed to polar residues. A Phosphotyrosine modification is found at Tyr-889. The tract at residues 891–927 (QLPSCSDGSQAPARPPKPRPRRTAPEIHHRKPHGPEA) is interaction with SH3KBP1. Residues 906–922 (PKPRPRRTAPEIHHRKP) show a composition bias toward basic residues. Positions 931 to 970 (NVDAKIAKLMGEGYAFEEVKRALEIAQNNVEVARSILREF) constitute a UBA domain.

As to quaternary structure, interacts with SH3 domain-containing proteins LCK, CRK and SORBS1. Interacts with LCP2 and ZAP70. Interacts with CBL. Interacts with SH3 domain-containing proteins VAV1, FYN, FGR, PLCG1, GRB2, CRKL, PIK3R1 and SH3KBP1/CIN85. Identified in heterotrimeric complexes with SH3KBP1/CIN85, CD2AP and ARHGEF7, where one CBLB peptide binds two copies of the other protein. Interacts with poly-ubiquitinated proteins. Dimerization is required for the binding of poly-ubiquitin, but not for the binding of mono-ubiquitin. Interacts with EGFR (phosphorylated). Interacts with IFT20. Post-translationally, phosphorylated on tyrosine and serine residues upon TCR or BCR activation, and upon various types of cell stimulation. In terms of processing, auto-ubiquitinated upon EGF-mediated cell activation or upon T-cell costimulation by CD28; which promotes proteasomal degradation. As to expression, expressed in placenta, heart, lung, kidney, spleen, ovary and testis, as well as fetal brain and liver and hematopoietic cell lines, but not in adult brain, liver, pancreas, salivary gland, or skeletal muscle. Present in lymphocytes (at protein level).

The protein resides in the cytoplasm. The catalysed reaction is S-ubiquitinyl-[E2 ubiquitin-conjugating enzyme]-L-cysteine + [acceptor protein]-L-lysine = [E2 ubiquitin-conjugating enzyme]-L-cysteine + N(6)-ubiquitinyl-[acceptor protein]-L-lysine.. Its pathway is protein modification; protein ubiquitination. Functionally, E3 ubiquitin-protein ligase which accepts ubiquitin from specific E2 ubiquitin-conjugating enzymes, and transfers it to substrates, generally promoting their degradation by the proteasome. Negatively regulates TCR (T-cell receptor), BCR (B-cell receptor) and FCER1 (high affinity immunoglobulin epsilon receptor) signal transduction pathways. In naive T-cells, inhibits VAV1 activation upon TCR engagement and imposes a requirement for CD28 costimulation for proliferation and IL-2 production. Also acts by promoting PIK3R1/p85 ubiquitination, which impairs its recruitment to the TCR and subsequent activation. In activated T-cells, inhibits PLCG1 activation and calcium mobilization upon restimulation and promotes anergy. In B-cells, acts by ubiquitinating SYK and promoting its proteasomal degradation. Slightly promotes SRC ubiquitination. May be involved in EGFR ubiquitination and internalization. May be functionally coupled with the E2 ubiquitin-protein ligase UB2D3. In association with CBL, required for proper feedback inhibition of ciliary platelet-derived growth factor receptor-alpha (PDGFRA) signaling pathway via ubiquitination and internalization of PDGFRA. This chain is E3 ubiquitin-protein ligase CBL-B (CBLB), found in Homo sapiens (Human).